The primary structure comprises 420 residues: Phosphoglycerate kinase, cytosolic (420 aa).

12 residues coordinate (2R)-3-phosphoglycerate: Val-23, Asp-24, Phe-25, Asn-26, Arg-39, Ser-61, His-62, Gly-64, Arg-65, Arg-135, His-171, and Arg-172. Gly-217 provides a ligand contact to ADP. Gly-217 provides a ligand contact to CDP. Lys-219 serves as a coordination point for (2R)-3-phosphoglycerate. AMP is bound at residue Lys-219. Asp-222 is a binding site for CDP. Asp-222 serves as a coordination point for Mg(2+). ADP is bound by residues Lys-223 and Gly-241. Lys-223 lines the AMP pocket. Lys-223 provides a ligand contact to ATP. CDP is bound at residue Gly-241. Residues Ala-242 and Ala-314 each coordinate AMP. The ATP site is built by Ala-242 and Ala-314. ADP is bound by residues Ala-314 and Asn-338. Residues Gly-339 and Phe-344 each contribute to the CDP site. Residues Phe-344, Glu-345, Asp-377, and Ser-378 each coordinate ADP. Residue Glu-345 participates in AMP binding. 3 residues coordinate ATP: Glu-345, Asp-377, and Ser-378. Asp-377 is a binding site for Mg(2+).

The protein belongs to the phosphoglycerate kinase family. In terms of assembly, monomer. The cofactor is Mg(2+).

The protein resides in the cytoplasm. It carries out the reaction (2R)-3-phosphoglycerate + ATP = (2R)-3-phospho-glyceroyl phosphate + ADP. It participates in carbohydrate degradation; glycolysis; pyruvate from D-glyceraldehyde 3-phosphate: step 2/5. The polypeptide is Phosphoglycerate kinase, cytosolic (C1PGK) (Trypanosoma congolense).